The chain runs to 209 residues: Pyridoxine/pyridoxamine 5'-phosphate oxidase (209 aa).

Substrate is bound by residues R7–Y10 and K64. FMN contacts are provided by residues R59 to K64, F74 to T75, and K81. Residues Y121, R125, and S129 each coordinate substrate. FMN is bound by residues Q138 to S139, W182, and R192.

Belongs to the pyridoxamine 5'-phosphate oxidase family. As to quaternary structure, homodimer. The cofactor is FMN.

The enzyme catalyses pyridoxamine 5'-phosphate + O2 + H2O = pyridoxal 5'-phosphate + H2O2 + NH4(+). It carries out the reaction pyridoxine 5'-phosphate + O2 = pyridoxal 5'-phosphate + H2O2. It functions in the pathway cofactor metabolism; pyridoxal 5'-phosphate salvage; pyridoxal 5'-phosphate from pyridoxamine 5'-phosphate: step 1/1. Its pathway is cofactor metabolism; pyridoxal 5'-phosphate salvage; pyridoxal 5'-phosphate from pyridoxine 5'-phosphate: step 1/1. Catalyzes the oxidation of either pyridoxine 5'-phosphate (PNP) or pyridoxamine 5'-phosphate (PMP) into pyridoxal 5'-phosphate (PLP). This Haemophilus ducreyi (strain 35000HP / ATCC 700724) protein is Pyridoxine/pyridoxamine 5'-phosphate oxidase.